Reading from the N-terminus, the 202-residue chain is Imidazoleglycerol-phosphate dehydratase (202 aa).

The protein belongs to the imidazoleglycerol-phosphate dehydratase family.

It is found in the cytoplasm. It catalyses the reaction D-erythro-1-(imidazol-4-yl)glycerol 3-phosphate = 3-(imidazol-4-yl)-2-oxopropyl phosphate + H2O. The protein operates within amino-acid biosynthesis; L-histidine biosynthesis; L-histidine from 5-phospho-alpha-D-ribose 1-diphosphate: step 6/9. In Mycolicibacterium gilvum (strain PYR-GCK) (Mycobacterium gilvum (strain PYR-GCK)), this protein is Imidazoleglycerol-phosphate dehydratase.